The chain runs to 340 residues: Tetrathionate reductase subunit C (340 aa).

Helical transmembrane passes span 19–39 (WLPW…AALF), 57–77 (ALLI…ADLH), 94–114 (WMPW…LWFL), 128–148 (VTKW…IYTG), 164–184 (AFPV…MIVA), 195–215 (ILWG…MWVS), 236–256 (YYAV…SLAL), 266–286 (VLLV…LLIQ), and 306–326 (TDGW…LIII).

This sequence belongs to the NrfD family. In terms of assembly, probably composed of three subunits: TtrA, TtrB and TtrC.

It is found in the cell inner membrane. Its function is as follows. Part of a membrane-bound tetrathionate reductase that catalyzes the reduction of tetrathionate to thiosulfate. TtrC probably anchors TtrA and TtrB to the periplasmic face of the cytoplasmic membrane. May transfer electrons from membrane quinol to TtrB. During mice infection, the ability to use tetrathionate as an electron acceptor is a growth advantage for S.typhimurium over the competing microbiota in the lumen of the inflamed gut. This is Tetrathionate reductase subunit C (ttrC) from Salmonella typhimurium (strain LT2 / SGSC1412 / ATCC 700720).